The primary structure comprises 337 residues: Heat-inducible transcription repressor HrcA (337 aa).

It belongs to the HrcA family.

Functionally, negative regulator of class I heat shock genes (grpE-dnaK-dnaJ and groELS operons). Prevents heat-shock induction of these operons. The chain is Heat-inducible transcription repressor HrcA from Pseudarthrobacter chlorophenolicus (strain ATCC 700700 / DSM 12829 / CIP 107037 / JCM 12360 / KCTC 9906 / NCIMB 13794 / A6) (Arthrobacter chlorophenolicus).